An 881-amino-acid polypeptide reads, in one-letter code: Mechanosensitive ion channel protein 5 (881 aa).

Composition is skewed to basic and acidic residues over residues 1 to 12 (MAAVDSTDRRDF) and 48 to 59 (DGEKGKNDKKGD). The disordered stretch occupies residues 1-248 (MAAVDSTDRR…RNGFEEEEEE (248 aa)). A compositionally biased stretch (polar residues) spans 115–145 (ELQSNTPPRPATASNTPRRGLTTISESSSPV). Basic and acidic residues predominate over residues 169-179 (EEGRNRDEAEV). Ser231 carries the phosphoserine modification. 6 helical membrane passes run 265 to 285 (LSFW…SLVC), 309 to 329 (VLVL…IVFL), 349 to 369 (KSVQ…FLFD), 387 to 407 (VLVC…LVKV), 642 to 662 (IINV…LGIA), and 677 to 697 (VAFV…FLFV). The segment at 861 to 881 (PTANPTSSDRIPPSWMQQRGP) is disordered. Over residues 864-881 (NPTSSDRIPPSWMQQRGP) the composition is skewed to polar residues.

Belongs to the MscS (TC 1.A.23) family.

The protein resides in the membrane. Mechanosensitive channel that opens in response to stretch forces in the membrane lipid bilayer. This Arabidopsis thaliana (Mouse-ear cress) protein is Mechanosensitive ion channel protein 5 (MSL5).